Here is a 436-residue protein sequence, read N- to C-terminus: UPF0597 protein YhaM (436 aa).

It belongs to the UPF0597 family.

The protein is UPF0597 protein YhaM of Escherichia coli O127:H6 (strain E2348/69 / EPEC).